The primary structure comprises 593 residues: Probable E3 ubiquitin-protein ligase ARI2 (593 aa).

Residues 120-334 (SMMSCDICVE…ISGHSCGRFQ (215 aa)) form a TRIAD supradomain region. Zn(2+) contacts are provided by Cys-124, Cys-127, Cys-141, His-143, Cys-146, Cys-149, Cys-168, Cys-173, Cys-215, Cys-221, Cys-237, Cys-239, Cys-244, Cys-247, His-252, Cys-257, Cys-284, and Cys-287. The segment at 124 to 173 (CDICVEDVPGYQLTRMDCGHSFCNNCWTGHFTVKINEGQSKRIICMAHKC) adopts an RING-type 1 zinc-finger fold. The IBR-type zinc finger occupies 195–257 (EKFDRFLLES…SSQAHSPCSC (63 aa)). The RING-type 2; atypical zinc-finger motif lies at 284-312 (CPKCHKPVEKNGGCNLVTCLCRQSFCWLC). Cys-297 is a catalytic residue. Cys-302, Cys-304, Cys-309, Cys-312, His-320, and Cys-330 together coordinate Zn(2+).

Belongs to the RBR family. Ariadne subfamily. The cofactor is Zn(2+). In terms of tissue distribution, ubiquitous.

The catalysed reaction is [E2 ubiquitin-conjugating enzyme]-S-ubiquitinyl-L-cysteine + [acceptor protein]-L-lysine = [E2 ubiquitin-conjugating enzyme]-L-cysteine + [acceptor protein]-N(6)-ubiquitinyl-L-lysine.. The protein operates within protein modification; protein ubiquitination. Functionally, might act as an E3 ubiquitin-protein ligase, or as part of E3 complex, which accepts ubiquitin from specific E2 ubiquitin-conjugating enzymes and then transfers it to substrates. This chain is Probable E3 ubiquitin-protein ligase ARI2 (ARI2), found in Arabidopsis thaliana (Mouse-ear cress).